A 171-amino-acid chain; its full sequence is Peptide deformylase (171 aa).

2 residues coordinate Fe cation: Cys91 and His133. Glu134 is a catalytic residue. His137 is a Fe cation binding site.

The protein belongs to the polypeptide deformylase family. The cofactor is Fe(2+).

It carries out the reaction N-terminal N-formyl-L-methionyl-[peptide] + H2O = N-terminal L-methionyl-[peptide] + formate. Removes the formyl group from the N-terminal Met of newly synthesized proteins. Requires at least a dipeptide for an efficient rate of reaction. N-terminal L-methionine is a prerequisite for activity but the enzyme has broad specificity at other positions. This Edwardsiella ictaluri (strain 93-146) protein is Peptide deformylase.